The sequence spans 83 residues: uncharacterized protein (83 aa).

The tract at residues 40–65 (RMQAGASPDEDNDVNGETSFSRSFGG) is disordered. A compositionally biased stretch (polar residues) spans 54–65 (NGETSFSRSFGG).

This is an uncharacterized protein from Dictyostelium discoideum (Social amoeba).